A 146-amino-acid chain; its full sequence is Basic phospholipase A2 beta-bungarotoxin A1 chain (146 aa).

The signal sequence occupies residues 1 to 19 (MNPAHLLVLPAVCVSFLGA). A propeptide spanning residues 20-27 (SIIPPQSL) is cleaved from the precursor. Cystine bridges form between C54-C145, C56-C72, C71-C126, C78-C119, C87-C112, and C105-C117. Ca(2+)-binding residues include Y55, G57, and G59. The active site involves H75. D76 is a binding site for Ca(2+). D120 is an active-site residue.

The protein belongs to the phospholipase A2 family. Group I subfamily. D49 sub-subfamily. As to quaternary structure, heterodimer with beta-bungarotoxin B chain; disulfide-linked. The A chain has phospholipase A2 activity and the B chain shows homology with the basic protease inhibitors. Ca(2+) serves as cofactor. Expressed by the venom gland.

Its subcellular location is the secreted. It carries out the reaction a 1,2-diacyl-sn-glycero-3-phosphocholine + H2O = a 1-acyl-sn-glycero-3-phosphocholine + a fatty acid + H(+). In terms of biological role, snake venom phospholipase A2 (PLA2) that inhibits neuromuscular transmission by blocking acetylcholine release from the nerve termini. PLA2 catalyzes the calcium-dependent hydrolysis of the 2-acyl groups in 3-sn-phosphoglycerides. The sequence is that of Basic phospholipase A2 beta-bungarotoxin A1 chain from Bungarus flaviceps flaviceps (Red-headed krait).